The chain runs to 296 residues: Cytidine deaminase (296 aa).

2 consecutive CMP/dCMP-type deaminase domains span residues 47-167 (TESE…FGPK) and 186-296 (DSSD…VDPI). 88 to 90 (NLE) contributes to the substrate binding site. His-101 provides a ligand contact to Zn(2+). Catalysis depends on Glu-103, which acts as the Proton donor. Cys-128 and Cys-131 together coordinate Zn(2+).

Belongs to the cytidine and deoxycytidylate deaminase family. As to quaternary structure, homodimer. Zn(2+) serves as cofactor.

It catalyses the reaction cytidine + H2O + H(+) = uridine + NH4(+). It carries out the reaction 2'-deoxycytidine + H2O + H(+) = 2'-deoxyuridine + NH4(+). Functionally, this enzyme scavenges exogenous and endogenous cytidine and 2'-deoxycytidine for UMP synthesis. The protein is Cytidine deaminase of Shewanella oneidensis (strain ATCC 700550 / JCM 31522 / CIP 106686 / LMG 19005 / NCIMB 14063 / MR-1).